We begin with the raw amino-acid sequence, 845 residues long: ATPase morc-1 (845 aa).

Residues Asn43, 88-90, and 97-103 contribute to the ATP site; these read SAK and RYGNGLK. Asn43 lines the Mg(2+) pocket. Positions 284 to 311 form a coiled coil; sequence AAYNKILDEKNETVKKCEEEKALVMSEI. Lys422 is a binding site for ATP. Disordered regions lie at residues 566–590 and 628–739; these read LPQK…SASS and KMEP…GKAV. The span at 574–590 shows a compositional bias: low complexity; sequence SAPSSSDSQNSIRSASS. Positions 637-646 are enriched in basic and acidic residues; it reads HDSHIAEVQR.

In terms of assembly, predominantly forms monomers and dimers, but multimerizes to form trimers and tetramers upon DNA binding. As to expression, expressed in germline and somatic cells.

It localises to the nucleus. Its subcellular location is the nuclear body. It catalyses the reaction ATP + H2O = ADP + phosphate + H(+). In terms of biological role, binds non-specifically to DNA and forms static foci which grow by recruiting other morc-1 molecules, and thereby stimulates conformational changes and compaction of DNA, which appears to be enhanced by ATP-binding, but does not require ATP activity. Preferentially binds to long DNAs. Compacts and entraps segments of DNA by sequentially forming loops along the DNA, beginning at the free ends of single- and double-tethered DNA. Does not extrude the DNA loops on compacted double-tethered DNA. Involved in gene silencing. Plays a role in germline RNA interference (RNAi), and in particular, the silencing of endogenous small interfering RNA (endo-siRNA) target genes. May play a role in heterochromatin localization and condensation, and the siRNAi-directed trimethylation of 'Lys-9' of histone H3 in hermaphrodite X chromosomes. Promotes transgenerational epigenetic inheritance and germline immortality. The polypeptide is ATPase morc-1 (Caenorhabditis elegans).